A 321-amino-acid polypeptide reads, in one-letter code: Lipoyl synthase (321 aa).

Residues Cys60, Cys65, Cys71, Cys86, Cys90, Cys93, and Ser299 each coordinate [4Fe-4S] cluster. The Radical SAM core domain maps to 72 to 288 (WEKKHATFMI…ETIGRTKGFL (217 aa)).

This sequence belongs to the radical SAM superfamily. Lipoyl synthase family. Requires [4Fe-4S] cluster as cofactor.

It localises to the cytoplasm. The enzyme catalyses [[Fe-S] cluster scaffold protein carrying a second [4Fe-4S](2+) cluster] + N(6)-octanoyl-L-lysyl-[protein] + 2 oxidized [2Fe-2S]-[ferredoxin] + 2 S-adenosyl-L-methionine + 4 H(+) = [[Fe-S] cluster scaffold protein] + N(6)-[(R)-dihydrolipoyl]-L-lysyl-[protein] + 4 Fe(3+) + 2 hydrogen sulfide + 2 5'-deoxyadenosine + 2 L-methionine + 2 reduced [2Fe-2S]-[ferredoxin]. Its pathway is protein modification; protein lipoylation via endogenous pathway; protein N(6)-(lipoyl)lysine from octanoyl-[acyl-carrier-protein]: step 2/2. Its function is as follows. Catalyzes the radical-mediated insertion of two sulfur atoms into the C-6 and C-8 positions of the octanoyl moiety bound to the lipoyl domains of lipoate-dependent enzymes, thereby converting the octanoylated domains into lipoylated derivatives. The protein is Lipoyl synthase of Brucella anthropi (strain ATCC 49188 / DSM 6882 / CCUG 24695 / JCM 21032 / LMG 3331 / NBRC 15819 / NCTC 12168 / Alc 37) (Ochrobactrum anthropi).